The following is a 395-amino-acid chain: MGKGTVVLAYSGGLDTSICIPLLKEEYGYDRVVTVAADVGQRKEEISIAEEKGKRFADKHYTLDLIDQFVDRCLMPSIKANGLYEGYPMGTSLARPVIAEAVVEIAKKEDATAVAHGCTGKGNDQLRFDVVFRAADLEVIAPIRERNMTREWEIGYAEKHGIPVPVDKEKPWSVDENLWSRSIEGGKLEDPAFHPPEEIYAWTVSPLKAPDEPQVLSITFEAGIPVALDGKRMKGADLIRTVGQIAGGHGIGRNDMMENRVLGIKAREIYEHPAANVLLTAHADLERLVLTREEYAFKQSVDAKWAQLAYYGLIYEPLWDALNAFIDTTQKRVNGTVDVRLFKGSVTVLGRSSPDSFYSIDVASFDSTTIDQTDAIGYSMYYGLQARLVRKKQKK.

ATP contacts are provided by residues 9 to 17 and Ala37; that span reads AYSGGLDTS. Tyr87 and Ser92 together coordinate L-citrulline. Residue Gly117 coordinates ATP. Residues Thr119, Asn123, and Asp124 each contribute to the L-aspartate site. Asn123 is a binding site for L-citrulline. L-citrulline-binding residues include Arg127, Ser173, Ser182, Glu258, and Tyr270.

This sequence belongs to the argininosuccinate synthase family. Type 1 subfamily. Homotetramer.

It localises to the cytoplasm. It carries out the reaction L-citrulline + L-aspartate + ATP = 2-(N(omega)-L-arginino)succinate + AMP + diphosphate + H(+). The protein operates within amino-acid biosynthesis; L-arginine biosynthesis; L-arginine from L-ornithine and carbamoyl phosphate: step 2/3. This Methanospirillum hungatei JF-1 (strain ATCC 27890 / DSM 864 / NBRC 100397 / JF-1) protein is Argininosuccinate synthase.